Here is a 357-residue protein sequence, read N- to C-terminus: Peptide chain release factor 1 (357 aa).

Position 234 is an N5-methylglutamine (Q234).

This sequence belongs to the prokaryotic/mitochondrial release factor family. Post-translationally, methylated by PrmC. Methylation increases the termination efficiency of RF1.

It localises to the cytoplasm. Functionally, peptide chain release factor 1 directs the termination of translation in response to the peptide chain termination codons UAG and UAA. The chain is Peptide chain release factor 1 from Nocardioides sp. (strain ATCC BAA-499 / JS614).